We begin with the raw amino-acid sequence, 261 residues long: Ribosomal RNA small subunit methyltransferase J (261 aa).

S-adenosyl-L-methionine-binding positions include 111 to 112 (RD), 127 to 128 (ER), 163 to 164 (SS), and D181.

This sequence belongs to the methyltransferase superfamily. RsmJ family.

It is found in the cytoplasm. It carries out the reaction guanosine(1516) in 16S rRNA + S-adenosyl-L-methionine = N(2)-methylguanosine(1516) in 16S rRNA + S-adenosyl-L-homocysteine + H(+). In terms of biological role, specifically methylates the guanosine in position 1516 of 16S rRNA. The protein is Ribosomal RNA small subunit methyltransferase J of Shewanella sp. (strain MR-7).